The following is a 272-amino-acid chain: Urease accessory protein UreD (272 aa).

Belongs to the UreD family. As to quaternary structure, ureD, UreF and UreG form a complex that acts as a GTP-hydrolysis-dependent molecular chaperone, activating the urease apoprotein by helping to assemble the nickel containing metallocenter of UreC. The UreE protein probably delivers the nickel.

It localises to the cytoplasm. Its function is as follows. Required for maturation of urease via the functional incorporation of the urease nickel metallocenter. The polypeptide is Urease accessory protein UreD (Opitutus terrae (strain DSM 11246 / JCM 15787 / PB90-1)).